The chain runs to 701 residues: Elongation factor G (701 aa).

The 283-residue stretch at Lys-8–Asp-290 folds into the tr-type G domain. GTP contacts are provided by residues Ala-17 to Thr-24, Asp-88 to His-92, and Asn-142 to Asp-145.

It belongs to the TRAFAC class translation factor GTPase superfamily. Classic translation factor GTPase family. EF-G/EF-2 subfamily.

The protein localises to the cytoplasm. In terms of biological role, catalyzes the GTP-dependent ribosomal translocation step during translation elongation. During this step, the ribosome changes from the pre-translocational (PRE) to the post-translocational (POST) state as the newly formed A-site-bound peptidyl-tRNA and P-site-bound deacylated tRNA move to the P and E sites, respectively. Catalyzes the coordinated movement of the two tRNA molecules, the mRNA and conformational changes in the ribosome. In Marinobacter nauticus (strain ATCC 700491 / DSM 11845 / VT8) (Marinobacter aquaeolei), this protein is Elongation factor G.